Here is a 104-residue protein sequence, read N- to C-terminus: MKLFAVFLLFCLVNQIYCRRSRSNTVEVTKKCKSGGKDTSMEKVEVEVSGSFYPTLELPDYCTHRRLDDDKCSKFCEHNCNPPFKRGVCGVWGDSQAGNCYCHT.

Residues 1-18 (MKLFAVFLLFCLVNQIYC) form the signal peptide. Intrachain disulfides connect C32–C80, C62–C89, C72–C100, and C76–C102. A Putative integrin attachment site; atypical (WGD) motif is present at residues 92 to 94 (WGD).

Interacts with host integrin alpha-V/beta-3 (ITGAV:ITGB3).

It localises to the secreted. Functionally, inhibits proliferation, adhesion and migration of host cells as well as host angiogenesis by blocking host integrin alpha-V/beta-3 (ITGAV:ITGB3). The chain is Salivary protein FS145 from Xenopsylla cheopis (Oriental rat flea).